The sequence spans 228 residues: NAD(P)H-hydrate epimerase (228 aa).

A YjeF N-terminal domain is found at 9-215 (AISIDEELFN…RLEEKYSLEL (207 aa)). 58–62 (NNGGD) contributes to the (6S)-NADPHX binding site. K(+) contacts are provided by Asn-59 and Asp-123. Residues 127–133 (GFSFKPP) and Asp-156 contribute to the (6S)-NADPHX site. Residue Ser-159 coordinates K(+).

The protein belongs to the NnrE/AIBP family. K(+) serves as cofactor.

The catalysed reaction is (6R)-NADHX = (6S)-NADHX. It carries out the reaction (6R)-NADPHX = (6S)-NADPHX. In terms of biological role, catalyzes the epimerization of the S- and R-forms of NAD(P)HX, a damaged form of NAD(P)H that is a result of enzymatic or heat-dependent hydration. This is a prerequisite for the S-specific NAD(P)H-hydrate dehydratase to allow the repair of both epimers of NAD(P)HX. The chain is NAD(P)H-hydrate epimerase from Anopheles darlingi (Mosquito).